A 122-amino-acid chain; its full sequence is Small ribosomal subunit protein uS13 (122 aa).

The segment at 98-122 (VRGQRTHTNARTRKGPAKAIAGKKK) is disordered.

It belongs to the universal ribosomal protein uS13 family. In terms of assembly, part of the 30S ribosomal subunit. Forms a loose heterodimer with protein S19. Forms two bridges to the 50S subunit in the 70S ribosome.

In terms of biological role, located at the top of the head of the 30S subunit, it contacts several helices of the 16S rRNA. In the 70S ribosome it contacts the 23S rRNA (bridge B1a) and protein L5 of the 50S subunit (bridge B1b), connecting the 2 subunits; these bridges are implicated in subunit movement. Contacts the tRNAs in the A and P-sites. In Roseobacter denitrificans (strain ATCC 33942 / OCh 114) (Erythrobacter sp. (strain OCh 114)), this protein is Small ribosomal subunit protein uS13.